Reading from the N-terminus, the 509-residue chain is Histidine ammonia-lyase (509 aa).

Residues 142–144 constitute a cross-link (5-imidazolinone (Ala-Gly)); that stretch reads ASG. Ser-143 is subject to 2,3-didehydroalanine (Ser).

Belongs to the PAL/histidase family. In terms of processing, contains an active site 4-methylidene-imidazol-5-one (MIO), which is formed autocatalytically by cyclization and dehydration of residues Ala-Ser-Gly.

Its subcellular location is the cytoplasm. The catalysed reaction is L-histidine = trans-urocanate + NH4(+). The protein operates within amino-acid degradation; L-histidine degradation into L-glutamate; N-formimidoyl-L-glutamate from L-histidine: step 1/3. The chain is Histidine ammonia-lyase from Sphingopyxis alaskensis (strain DSM 13593 / LMG 18877 / RB2256) (Sphingomonas alaskensis).